A 117-amino-acid chain; its full sequence is Large ribosomal subunit protein eL34 (117 aa).

Serine 12 carries the post-translational modification Phosphoserine. Lysine 36 and lysine 43 each carry N6-acetyllysine. Residue lysine 108 forms a Glycyl lysine isopeptide (Lys-Gly) (interchain with G-Cter in SUMO2) linkage.

It belongs to the eukaryotic ribosomal protein eL34 family. As to quaternary structure, component of the large ribosomal subunit.

Its subcellular location is the cytoplasm. The protein resides in the cytosol. It is found in the endoplasmic reticulum. Its function is as follows. Component of the large ribosomal subunit. The ribosome is a large ribonucleoprotein complex responsible for the synthesis of proteins in the cell. In Rattus norvegicus (Rat), this protein is Large ribosomal subunit protein eL34 (Rpl34).